Reading from the N-terminus, the 337-residue chain is tRNA N(3)-cytidine methyltransferase METTL2 (337 aa).

S-adenosyl-L-methionine-binding residues include W66, Y70, G140, D165, D191, and I212.

This sequence belongs to the methyltransferase superfamily. METL family. As to quaternary structure, monomer.

The protein resides in the cytoplasm. It catalyses the reaction cytidine(32) in tRNA(Thr) + S-adenosyl-L-methionine = N(3)-methylcytidine(32) in tRNA(Thr) + S-adenosyl-L-homocysteine + H(+). The catalysed reaction is cytidine(32) in tRNA(Arg)(CCU) + S-adenosyl-L-methionine = N(3)-methylcytidine(32) in tRNA(Arg)(CCU) + S-adenosyl-L-homocysteine + H(+). Its function is as follows. S-adenosyl-L-methionine-dependent methyltransferase that mediates N(3)-methylcytidine modification of residue 32 of the tRNA anticodon loop of tRNA(Thr)(UGU) and tRNA(Arg)(CCU). N(3)-methylcytidine methylation by mettl2 requires the N6-threonylcarbamoylation of tRNA (t6A37) by the EKC/KEOPS complex as prerequisite. The polypeptide is tRNA N(3)-cytidine methyltransferase METTL2 (mettl2) (Xenopus tropicalis (Western clawed frog)).